The following is a 648-amino-acid chain: Threonine--tRNA ligase (648 aa).

Residues M1 to T61 enclose the TGS domain. The tract at residues D242–P540 is catalytic. Positions 336, 387, and 517 each coordinate Zn(2+).

It belongs to the class-II aminoacyl-tRNA synthetase family. Homodimer. Zn(2+) is required as a cofactor.

The protein localises to the cytoplasm. The catalysed reaction is tRNA(Thr) + L-threonine + ATP = L-threonyl-tRNA(Thr) + AMP + diphosphate + H(+). Catalyzes the attachment of threonine to tRNA(Thr) in a two-step reaction: L-threonine is first activated by ATP to form Thr-AMP and then transferred to the acceptor end of tRNA(Thr). Also edits incorrectly charged L-seryl-tRNA(Thr). The protein is Threonine--tRNA ligase of Streptococcus equi subsp. zooepidemicus (strain H70).